The sequence spans 680 residues: DNA-directed RNA polymerase subunit beta' (680 aa).

The Zn(2+) site is built by C69, C71, C87, and C90. The Mg(2+) site is built by D489, D491, and D493.

It belongs to the RNA polymerase beta' chain family. RpoC1 subfamily. In plastids the minimal PEP RNA polymerase catalytic core is composed of four subunits: alpha, beta, beta', and beta''. When a (nuclear-encoded) sigma factor is associated with the core the holoenzyme is formed, which can initiate transcription. It depends on Mg(2+) as a cofactor. Requires Zn(2+) as cofactor.

It localises to the plastid. It is found in the chloroplast. It catalyses the reaction RNA(n) + a ribonucleoside 5'-triphosphate = RNA(n+1) + diphosphate. In terms of biological role, DNA-dependent RNA polymerase catalyzes the transcription of DNA into RNA using the four ribonucleoside triphosphates as substrates. This Nandina domestica (Heavenly bamboo) protein is DNA-directed RNA polymerase subunit beta'.